Here is a 242-residue protein sequence, read N- to C-terminus: Ubiquinone biosynthesis O-methyltransferase (242 aa).

Positions 44, 64, 85, and 129 each coordinate S-adenosyl-L-methionine.

It belongs to the methyltransferase superfamily. UbiG/COQ3 family.

The catalysed reaction is a 3-demethylubiquinol + S-adenosyl-L-methionine = a ubiquinol + S-adenosyl-L-homocysteine + H(+). The enzyme catalyses a 3-(all-trans-polyprenyl)benzene-1,2-diol + S-adenosyl-L-methionine = a 2-methoxy-6-(all-trans-polyprenyl)phenol + S-adenosyl-L-homocysteine + H(+). The protein operates within cofactor biosynthesis; ubiquinone biosynthesis. Functionally, O-methyltransferase that catalyzes the 2 O-methylation steps in the ubiquinone biosynthetic pathway. The protein is Ubiquinone biosynthesis O-methyltransferase of Salmonella arizonae (strain ATCC BAA-731 / CDC346-86 / RSK2980).